The primary structure comprises 61 residues: Small ribosomal subunit protein uS14 (61 aa).

The Zn(2+) site is built by cysteine 24, cysteine 27, cysteine 40, and cysteine 43.

Belongs to the universal ribosomal protein uS14 family. Zinc-binding uS14 subfamily. In terms of assembly, part of the 30S ribosomal subunit. Contacts proteins S3 and S10. Zn(2+) serves as cofactor.

Its function is as follows. Binds 16S rRNA, required for the assembly of 30S particles and may also be responsible for determining the conformation of the 16S rRNA at the A site. The polypeptide is Small ribosomal subunit protein uS14 (Alkaliphilus metalliredigens (strain QYMF)).